The following is a 475-amino-acid chain: MQETTVKRDGASPSDAGTPATTAQGLGKLYIRTFGCQMNEYDSDKMADVLRADQGLELTDNPEDADVILFNTCSVREKAQEKVFSDLGRVQHLKKQNPNLVIGVGGCVASQEGEAIVKRAPYVDVVFGPQTLHRLPDLIKRRRAQGVSQVDISFPEIEKFDALPPPRVDGATAFVSIMEGCSKYCSFCVVPYTRGEEVSRPFDDVLLEVADLADQGVKEVTLLGQNVNAYRGAMGDSGEIADFAMLLEYVHEIPGIERIRYTTSHPKEMTQRMVDAYARLPKLVSFLHLPVQAGSDRVLAAMKRGYTALEFKSVVRRLRAARPSLTLSSDFIVGFPGETEEDFQKTMKLIEDVGFDTSFSFVYSRRPGTPAADLHDDTPQDVKLRRLQQLQALINQQAAAIAQGMIGTRQRVLVEGPSRRDPNELMGRTENNRIVNFPGVPRLIGHMVDVVVTHAHTNSLRGRVAGIERDTSGAE.

The span at 1–10 shows a compositional bias: basic and acidic residues; it reads MQETTVKRDG. The interval 1 to 22 is disordered; that stretch reads MQETTVKRDGASPSDAGTPATT. The MTTase N-terminal domain occupies 27-144; it reads GKLYIRTFGC…LPDLIKRRRA (118 aa). Cys36, Cys73, Cys107, Cys181, Cys185, and Cys188 together coordinate [4Fe-4S] cluster. The Radical SAM core domain occupies 167–400; the sequence is RVDGATAFVS…QALINQQAAA (234 aa). The TRAM domain maps to 403-466; the sequence is QGMIGTRQRV…TNSLRGRVAG (64 aa).

Belongs to the methylthiotransferase family. MiaB subfamily. In terms of assembly, monomer. It depends on [4Fe-4S] cluster as a cofactor.

It is found in the cytoplasm. The catalysed reaction is N(6)-dimethylallyladenosine(37) in tRNA + (sulfur carrier)-SH + AH2 + 2 S-adenosyl-L-methionine = 2-methylsulfanyl-N(6)-dimethylallyladenosine(37) in tRNA + (sulfur carrier)-H + 5'-deoxyadenosine + L-methionine + A + S-adenosyl-L-homocysteine + 2 H(+). Its function is as follows. Catalyzes the methylthiolation of N6-(dimethylallyl)adenosine (i(6)A), leading to the formation of 2-methylthio-N6-(dimethylallyl)adenosine (ms(2)i(6)A) at position 37 in tRNAs that read codons beginning with uridine. The sequence is that of tRNA-2-methylthio-N(6)-dimethylallyladenosine synthase from Bordetella bronchiseptica (strain ATCC BAA-588 / NCTC 13252 / RB50) (Alcaligenes bronchisepticus).